The following is a 157-amino-acid chain: Phosphopantetheine adenylyltransferase (157 aa).

A substrate-binding site is contributed by Thr-8. Residues 8-9 (TF) and His-16 contribute to the ATP site. Substrate is bound by residues Lys-40, Thr-72, and Arg-86. ATP is bound by residues 87 to 89 (GLR), Glu-97, and 122 to 128 (YSFLSSS).

Belongs to the bacterial CoaD family. In terms of assembly, homohexamer. Mg(2+) is required as a cofactor.

The protein localises to the cytoplasm. The enzyme catalyses (R)-4'-phosphopantetheine + ATP + H(+) = 3'-dephospho-CoA + diphosphate. It participates in cofactor biosynthesis; coenzyme A biosynthesis; CoA from (R)-pantothenate: step 4/5. Its function is as follows. Reversibly transfers an adenylyl group from ATP to 4'-phosphopantetheine, yielding dephospho-CoA (dPCoA) and pyrophosphate. The polypeptide is Phosphopantetheine adenylyltransferase (Prochlorococcus marinus (strain MIT 9312)).